The chain runs to 223 residues: Ion-translocating oxidoreductase complex subunit E (223 aa).

6 helical membrane-spanning segments follow: residues 17 to 37, 40 to 60, 70 to 90, 94 to 114, 129 to 149, and 182 to 202; these read NGVL…GTAT, LGMG…VAMF, IPVY…GMNA, ELYK…LPLA, FLDG…IGAV, and WGIL…LMVV.

It belongs to the NqrDE/RnfAE family. In terms of assembly, the complex is composed of six subunits: RnfA, RnfB, RnfC, RnfD, RnfE and RnfG.

The protein localises to the cell inner membrane. In terms of biological role, part of a membrane-bound complex that couples electron transfer with translocation of ions across the membrane. This Paramagnetospirillum magneticum (strain ATCC 700264 / AMB-1) (Magnetospirillum magneticum) protein is Ion-translocating oxidoreductase complex subunit E.